A 266-amino-acid chain; its full sequence is Proline-rich protein 23A (266 aa).

Residues Met-1 to Gln-18 are compositionally biased toward low complexity. 2 disordered regions span residues Met-1–Asp-47 and Glu-197–Glu-266. The segment covering Pro-227–Pro-238 has biased composition (pro residues). Residues Pro-255 to Glu-266 are compositionally biased toward basic residues.

Belongs to the PRR23 family.

In Homo sapiens (Human), this protein is Proline-rich protein 23A (PRR23A).